The sequence spans 438 residues: Protein maelstrom 1 (438 aa).

A DNA-binding region (HMG box) is located at residues 2–69 (APKKRNGFMT…LERTAKKERL (68 aa)). The segment at 374–438 (KEMGSRDLSP…NMGAGKKIAR (65 aa)) is disordered. A compositionally biased stretch (polar residues) spans 381-391 (LSPSSSHQSVS).

The protein belongs to the maelstrom family.

It is found in the cytoplasm. It localises to the nucleus. In terms of biological role, involved both in the piRNA and miRNA metabolic processes. As a component of the meiotic nuage, plays a central role during oogenesis by repressing transposable elements and preventing their mobilization, which is essential for the germline integrity. Repression of transposable elements is mediated via the piRNA metabolic process, which mediates the repression of transposable elements during meiosis by forming complexes composed of piRNAs and Piwi proteins and governs the repression of transposons. As a nuclear component, it is required for proper differentiation in the germline stem cell (GSC) lineage by repressing microRNA-7 (miR-7), thereby acting as an indirect regulator of bag-of-marbles (Bam). Acts by binding to the promoter of miR-7 gene and repressing its expression; miR-7 repression alleviates the Bam repression by miR-7, thereby allowing differentiation in the germline stem cell (GSC) lineage. This is Protein maelstrom 1 (mael1) from Drosophila persimilis (Fruit fly).